A 96-amino-acid chain; its full sequence is Phosphoribosyl-ATP pyrophosphatase (96 aa).

Belongs to the PRA-PH family.

It is found in the cytoplasm. It catalyses the reaction 1-(5-phospho-beta-D-ribosyl)-ATP + H2O = 1-(5-phospho-beta-D-ribosyl)-5'-AMP + diphosphate + H(+). It functions in the pathway amino-acid biosynthesis; L-histidine biosynthesis; L-histidine from 5-phospho-alpha-D-ribose 1-diphosphate: step 2/9. The protein is Phosphoribosyl-ATP pyrophosphatase of Methanococcus vannielii (strain ATCC 35089 / DSM 1224 / JCM 13029 / OCM 148 / SB).